We begin with the raw amino-acid sequence, 360 residues long: tRNA (guanine(37)-N(1))-methyltransferase (360 aa).

S-adenosyl-L-methionine-binding positions include arginine 197, 235–236 (DL), and asparagine 283.

This sequence belongs to the class I-like SAM-binding methyltransferase superfamily. TRM5/TYW2 family. Monomer.

The protein localises to the mitochondrion matrix. It is found in the nucleus. It localises to the cytoplasm. It carries out the reaction guanosine(37) in tRNA + S-adenosyl-L-methionine = N(1)-methylguanosine(37) in tRNA + S-adenosyl-L-homocysteine + H(+). In terms of biological role, specifically methylates the N1 position of guanosine-37 in various cytoplasmic and mitochondrial tRNAs. Methylation is not dependent on the nature of the nucleoside 5' of the target nucleoside. This is the first step in the biosynthesis of wybutosine (yW), a modified base adjacent to the anticodon of tRNAs and required for accurate decoding. This is tRNA (guanine(37)-N(1))-methyltransferase from Encephalitozoon cuniculi (strain GB-M1) (Microsporidian parasite).